The following is a 254-amino-acid chain: Probable pectate lyase E (254 aa).

Residues 1–17 (MYQPLLLLPLLLTSAFA) form the signal peptide. A glycan (N-linked (GlcNAc...) asparagine) is linked at Asn175. The segment at 227–254 (TDNNDKEPKKKGSGPSNACKYKEPLSKC) is disordered.

It belongs to the polysaccharide lyase 3 family. Ca(2+) serves as cofactor.

Its subcellular location is the secreted. The catalysed reaction is Eliminative cleavage of (1-&gt;4)-alpha-D-galacturonan to give oligosaccharides with 4-deoxy-alpha-D-galact-4-enuronosyl groups at their non-reducing ends.. Its function is as follows. Pectinolytic enzyme consist of four classes of enzymes: pectin lyase, polygalacturonase, pectin methylesterase and rhamnogalacturonase. Among pectinolytic enzymes, pectin lyase is the most important in depolymerization of pectin, since it cleaves internal glycosidic bonds of highly methylated pectins. Favors pectate, the anion, over pectin, the methyl ester. The polypeptide is Probable pectate lyase E (plyE) (Neosartorya fischeri (strain ATCC 1020 / DSM 3700 / CBS 544.65 / FGSC A1164 / JCM 1740 / NRRL 181 / WB 181) (Aspergillus fischerianus)).